The sequence spans 301 residues: Mitochondrial carnitine/acylcarnitine carrier protein (301 aa).

Alanine 2 is subject to N-acetylalanine. The Cytoplasmic portion of the chain corresponds to 2–12 (AEEPKPISPLK). 3 Solcar repeats span residues 8–99 (ISPL…GKRL), 108–196 (LTYP…LKNL), and 207–293 (LSVP…PMKI). The helical transmembrane segment at 13-31 (NLLAGGFGGVCLVFVGHPL) threads the bilayer. Over 32-73 (DTVKVRLQTQPPSLPGQPPMYSGTIDCFRKTLFREGITGLYR) the chain is Mitochondrial matrix. A helical transmembrane segment spans residues 74–93 (GMAAPIIGVTPMFAVCFFGF). Residues 94-112 (GLGKRLQQKSPEDELTYPQ) lie on the Cytoplasmic side of the membrane. The helical transmembrane segment at 113–131 (LFTAGMLSGVFTTGIMTPG) threads the bilayer. Over 132-170 (ERIKCLLQIQASSGKNKYSGTLDCAKKLYQEFGIRGFYK) the chain is Mitochondrial matrix. An N6-acetyllysine mark is found at lysine 148 and lysine 157. The residue at position 170 (lysine 170) is an N6-acetyllysine; alternate. At lysine 170 the chain carries N6-succinyllysine; alternate. Residues 171 to 190 (GTALTLMRDVPASGMYFMTY) traverse the membrane as a helical segment. The Cytoplasmic portion of the chain corresponds to 191 to 211 (EWLKNLFTPQGKSVHDLSVPR). A helical membrane pass occupies residues 212-230 (VLVAGGFRGIFNWVVAIPP). The Mitochondrial matrix portion of the chain corresponds to 231 to 267 (DVLKSRFQTAPPGKYPNGFRDVLRELIREEGVTSLYK). A helical membrane pass occupies residues 268-287 (GFNAVMIRAFPANAACFLGF). The Cytoplasmic segment spans residues 288 to 301 (EIPMKILNWIAPNL).

It belongs to the mitochondrial carrier (TC 2.A.29) family. Post-translationally, the N-terminus is blocked.

It localises to the mitochondrion inner membrane. It carries out the reaction O-acetyl-(R)-carnitine(in) + (R)-carnitine(out) = O-acetyl-(R)-carnitine(out) + (R)-carnitine(in). The enzyme catalyses an O-acyl-(R)-carnitine(in) + (R)-carnitine(out) = an O-acyl-(R)-carnitine(out) + (R)-carnitine(in). The catalysed reaction is O-propanoyl-(R)-carnitine(in) + (R)-carnitine(out) = O-propanoyl-(R)-carnitine(out) + (R)-carnitine(in). It catalyses the reaction O-hexadecanoyl-(R)-carnitine(in) + (R)-carnitine(out) = O-hexadecanoyl-(R)-carnitine(out) + (R)-carnitine(in). It carries out the reaction O-octanoyl-(R)-carnitine(in) + (R)-carnitine(out) = O-octanoyl-(R)-carnitine(out) + (R)-carnitine(in). The enzyme catalyses (R)-carnitine(in) = (R)-carnitine(out). Its function is as follows. Mediates the electroneutral exchange of acylcarnitines (O-acyl-(R)-carnitine or L-acylcarnitine) of different acyl chain lengths (ranging from O-acetyl-(R)-carnitine to long-chain O-acyl-(R)-carnitines) with free carnitine ((R)-carnitine or L-carnitine) across the mitochondrial inner membrane, via a ping-pong mechanism. Key player in the mitochondrial oxidation pathway, it translocates the fatty acids in the form of acylcarnitines into the mitochondrial matrix, where the carnitine palmitoyltransferase 2 (CPT-2) activates them to undergo fatty acid beta-oxidation. Catalyzes the unidirectional transport (uniport) of carnitine at lower rates than the antiport (exchange). The protein is Mitochondrial carnitine/acylcarnitine carrier protein of Rattus norvegicus (Rat).